Consider the following 256-residue polypeptide: Leucyl/phenylalanyl-tRNA--protein transferase (256 aa).

Belongs to the L/F-transferase family.

The protein resides in the cytoplasm. The enzyme catalyses N-terminal L-lysyl-[protein] + L-leucyl-tRNA(Leu) = N-terminal L-leucyl-L-lysyl-[protein] + tRNA(Leu) + H(+). It catalyses the reaction N-terminal L-arginyl-[protein] + L-leucyl-tRNA(Leu) = N-terminal L-leucyl-L-arginyl-[protein] + tRNA(Leu) + H(+). The catalysed reaction is L-phenylalanyl-tRNA(Phe) + an N-terminal L-alpha-aminoacyl-[protein] = an N-terminal L-phenylalanyl-L-alpha-aminoacyl-[protein] + tRNA(Phe). In terms of biological role, functions in the N-end rule pathway of protein degradation where it conjugates Leu, Phe and, less efficiently, Met from aminoacyl-tRNAs to the N-termini of proteins containing an N-terminal arginine or lysine. This Hydrogenovibrio crunogenus (strain DSM 25203 / XCL-2) (Thiomicrospira crunogena) protein is Leucyl/phenylalanyl-tRNA--protein transferase.